Consider the following 135-residue polypeptide: Protein PilG (135 aa).

A Response regulatory domain is found at 9-125 (KVMVIDDSKT…ELLGAIKAHV (117 aa)). Aspartate 58 is modified (4-aspartylphosphate).

Post-translationally, phosphorylated.

In terms of biological role, plays an essential role in both cAMP-dependent and independent regulation of twitching motility. Regulates the cAMP-independent coordination of type IV pilus (T4P) biogenesis and retraction that plays a role in surface and host cell adhesion, colonization, biofilm maturation, virulence, and twitching. In addition, phosphorylated PilG is necessary for cAMP production via regulation of the adenylate cyclase CyaB. Acts therefore as a response regulator of the chemosensory system/Chp system. This is Protein PilG (pilG) from Pseudomonas aeruginosa (strain ATCC 15692 / DSM 22644 / CIP 104116 / JCM 14847 / LMG 12228 / 1C / PRS 101 / PAO1).